Consider the following 357-residue polypeptide: MTAAKIKVLCVDDSALIRSLMSEIINSQPDMEVVGTAPDPLVARDLIKRVNPDVLTLDVEMPRMDGLDFLERLMRLRPMPVLMVSSLTERGSEITMRALELGAVDFVTKPKLGIREGLLDYTQTIADKIRAASRARVRARAEQSAGAAPVAPMLRAPLLSTEKLIIVGASTGGTEAIKDFLTPLPPDSPAVMIVQHMPAGFTKSFAHRLNGLCRITVKEAEHGERVLPGYAYIAPGDSHLLLARSGANYVAHLSQEAPVNRHRPSVDVLFDSAAIHGGKNVTGVILTGMGKDGARGMLRMREAGAYNLAQDEQSCIVFGMPKEAIAAGGVHEVVPLHQMSQRVMAHLATFGARAQRV.

The Response regulatory domain maps to 7-124 (KVLCVDDSAL…REGLLDYTQT (118 aa)). D58 carries the post-translational modification 4-aspartylphosphate. Positions 158 to 350 (LLSTEKLIIV…QRVMAHLATF (193 aa)) constitute a CheB-type methylesterase domain. Catalysis depends on residues S170, H196, and D292.

It belongs to the CheB family. Phosphorylated by CheA. Phosphorylation of the N-terminal regulatory domain activates the methylesterase activity.

Its subcellular location is the cytoplasm. The enzyme catalyses [protein]-L-glutamate 5-O-methyl ester + H2O = L-glutamyl-[protein] + methanol + H(+). It carries out the reaction L-glutaminyl-[protein] + H2O = L-glutamyl-[protein] + NH4(+). Functionally, involved in chemotaxis. Part of a chemotaxis signal transduction system that modulates chemotaxis in response to various stimuli. Catalyzes the demethylation of specific methylglutamate residues introduced into the chemoreceptors (methyl-accepting chemotaxis proteins or MCP) by CheR. Also mediates the irreversible deamidation of specific glutamine residues to glutamic acid. The chain is Protein-glutamate methylesterase/protein-glutamine glutaminase 1 from Cupriavidus metallidurans (strain ATCC 43123 / DSM 2839 / NBRC 102507 / CH34) (Ralstonia metallidurans).